Reading from the N-terminus, the 378-residue chain is Carbamoyl phosphate synthase small chain (378 aa).

The interval 1–189 (MTKPAILALA…DSHPTIDAAD (189 aa)) is CPSase. Residues Ser-47, Gly-241, and Gly-243 each contribute to the L-glutamine site. One can recognise a Glutamine amidotransferase type-1 domain in the interval 193-378 (HVVAFDYGVK…RFTDAMAKRR (186 aa)). Catalysis depends on Cys-269, which acts as the Nucleophile. L-glutamine is bound by residues Leu-270, Gln-273, Asn-311, Gly-313, and Phe-314. Residues His-353 and Glu-355 contribute to the active site.

The protein belongs to the CarA family. As to quaternary structure, composed of two chains; the small (or glutamine) chain promotes the hydrolysis of glutamine to ammonia, which is used by the large (or ammonia) chain to synthesize carbamoyl phosphate. Tetramer of heterodimers (alpha,beta)4.

It carries out the reaction hydrogencarbonate + L-glutamine + 2 ATP + H2O = carbamoyl phosphate + L-glutamate + 2 ADP + phosphate + 2 H(+). The enzyme catalyses L-glutamine + H2O = L-glutamate + NH4(+). It functions in the pathway amino-acid biosynthesis; L-arginine biosynthesis; carbamoyl phosphate from bicarbonate: step 1/1. The protein operates within pyrimidine metabolism; UMP biosynthesis via de novo pathway; (S)-dihydroorotate from bicarbonate: step 1/3. In terms of biological role, small subunit of the glutamine-dependent carbamoyl phosphate synthetase (CPSase). CPSase catalyzes the formation of carbamoyl phosphate from the ammonia moiety of glutamine, carbonate, and phosphate donated by ATP, constituting the first step of 2 biosynthetic pathways, one leading to arginine and/or urea and the other to pyrimidine nucleotides. The small subunit (glutamine amidotransferase) binds and cleaves glutamine to supply the large subunit with the substrate ammonia. The polypeptide is Carbamoyl phosphate synthase small chain (Pseudomonas putida (strain ATCC 47054 / DSM 6125 / CFBP 8728 / NCIMB 11950 / KT2440)).